A 236-amino-acid chain; its full sequence is Uridylate kinase (236 aa).

9 to 12 (KFSG) provides a ligand contact to ATP. Residues 17-22 (GNSGFG) form an involved in allosteric activation by GTP region. Residue G51 coordinates UMP. Positions 52 and 56 each coordinate ATP. Residues D72 and 133–140 (TGNPFFTT) contribute to the UMP site. The ATP site is built by T160, Y166, and D169.

The protein belongs to the UMP kinase family. Homohexamer.

It localises to the cytoplasm. The catalysed reaction is UMP + ATP = UDP + ADP. Its pathway is pyrimidine metabolism; CTP biosynthesis via de novo pathway; UDP from UMP (UMPK route): step 1/1. Allosterically activated by GTP. Inhibited by UTP. In terms of biological role, catalyzes the reversible phosphorylation of UMP to UDP. In Helicobacter hepaticus (strain ATCC 51449 / 3B1), this protein is Uridylate kinase.